We begin with the raw amino-acid sequence, 879 residues long: DNA methyltransferase A (879 aa).

It belongs to the methyltransferase superfamily.

The catalysed reaction is a 2'-deoxyadenosine in DNA + S-adenosyl-L-methionine = an N(6)-methyl-2'-deoxyadenosine in DNA + S-adenosyl-L-homocysteine + H(+). In terms of biological role, recognizes the double-stranded sequence 5'-GACGAG-3' and methylates A-5, yielding m6A. m6A methylation functions as a transcriptional modifier, promoting transcription of a number of genes (at least scpA, hbs, rnhC, yumC and zapA). One studied mechanism is via transcriptional repressor ScoC (also called hpr) which binds to non-methylated scpA promoter; when the m6A target is methylated ScoC no longer binds and scpA transcription is up-regulated. Other mechanisms for gene expression regulation probably exist. Binds DNA with and without the target sequence. Although it resembles a restriction-modification system, it does not have detectable endonuclease activity under tested conditions. A gamma subtype methylase. The sequence is that of DNA methyltransferase A from Bacillus subtilis (strain 168).